Here is a 5005-residue protein sequence, read N- to C-terminus: Bridge-like lipid transfer protein family member 1 (5005 aa).

A helical transmembrane segment spans residues 26–46 (NVVWLLVATILSCGWIIYLTY). Disordered regions lie at residues 691 to 721 (LRPS…LPPD), 1218 to 1257 (LSLQ…SSVA), and 1269 to 1310 (GTKR…LKRQ). 2 stretches are compositionally biased toward low complexity: residues 700–711 (RVVSSPSTSSRP) and 1226–1240 (SHSS…SSSS). A compositionally biased stretch (basic and acidic residues) spans 1248–1257 (GEKESPSSVA). A compositionally biased stretch (polar residues) spans 1278-1303 (SIPTEISGNSPVSPNTQDKSVGQSPL). 3 positions are modified to phosphoserine: Ser1301, Ser1305, and Ser1323. Residue Thr1325 is modified to Phosphothreonine. 4 disordered regions span residues 1343 to 1376 (SDVS…SNSF), 1400 to 1427 (EFEP…QQID), 1521 to 1548 (TNKR…SSSF), and 1676 to 1704 (FSEN…QGQA). Ser1355 and Ser1406 each carry phosphoserine. Basic residues predominate over residues 1521–1530 (TNKRTSKSSL). Polar residues predominate over residues 1691–1704 (TEQSTIGTTNQGQA). Phosphoserine is present on residues Ser1805 and Ser1808. 3 disordered regions span residues 1924 to 1991 (DTER…PLMP), 2401 to 2420 (SDQN…QDDV), and 2598 to 2677 (TAGS…KDVV). 4 stretches are compositionally biased toward polar residues: residues 1931-1948 (LTSN…YNTD), 1959-1971 (TSPS…NSVS), 2401-2418 (SDQN…TSQD), and 2598-2608 (TAGSASPTPTF). A phosphoserine mark is found at Ser2601 and Ser2603. The span at 2619-2638 (SDFSRSSRGSLNGGNRVNNA) shows a compositional bias: low complexity. The segment covering 2643–2665 (TNNENNKKESRNKNSLGRSERRT) has biased composition (basic and acidic residues). Position 2755 is a phosphoserine (Ser2755). The disordered stretch occupies residues 2928–2967 (RQPSTAPQPVKEDIATPLPSEKTPTSVNQTPVETNEFPQL). Polar residues predominate over residues 2949-2964 (KTPTSVNQTPVETNEF). A Phosphoserine modification is found at Ser3562. Polar residues predominate over residues 3612 to 3622 (PSYSRSKSISA). Disordered stretches follow at residues 3612–3661 (PSYS…VTFN), 3686–3744 (SSNS…ERFY), 3821–3843 (RRSY…KKFQ), 3914–3954 (YGMK…KGKG), 4088–4146 (GTTY…SSSS), and 4325–4394 (QSAS…KAAS). A Phosphoserine modification is found at Ser3653. Polar residues predominate over residues 3686–3700 (SSNSEGSCSVFSSPK). Residues 3727–3736 (EDSEKDEKDE) show a composition bias toward acidic residues. Positions 3821–3837 (RRSYDRSSRSLDQDSPS) are enriched in basic and acidic residues. 2 stretches are compositionally biased toward polar residues: residues 3931–3940 (TVQSKTNTLL) and 4098–4113 (PGGN…SASK). Low complexity predominate over residues 4122-4146 (LGSPLGRSRHSSSQSDLTSSSSSSS). The residue at position 4124 (Ser4124) is a Phosphoserine. Over residues 4325–4358 (QSASFTHMPQSPNVFNEHMTNSTMSPGTVGQSLK) the composition is skewed to polar residues. Low complexity predominate over residues 4359 to 4372 (SPASIRSRSVSDSS). Over residues 4381 to 4394 (KTSTPFNKSNKAAS) the composition is skewed to polar residues.

Highly expressed in testis and ovary. Weakly or not expressed in other tissues.

The protein resides in the cell membrane. It is found in the endoplasmic reticulum membrane. It localises to the mitochondrion membrane. Its function is as follows. Tube-forming lipid transport protein which provides phosphatidylethanolamine for glycosylphosphatidylinositol (GPI) anchor synthesis in the endoplasmic reticulum. Plays a role in endosomal trafficking and endosome recycling. Also involved in the actin cytoskeleton and cilia structural dynamics. Acts as a regulator of phagocytosis. The protein is Bridge-like lipid transfer protein family member 1 of Homo sapiens (Human).